Consider the following 391-residue polypeptide: Succinate--CoA ligase [ADP-forming] subunit beta (391 aa).

In terms of domain architecture, ATP-grasp spans 9 to 248 (KDILRKFGVA…ITEEDPFEVE (240 aa)). ATP contacts are provided by residues Lys50, 57 to 59 (GRG), Glu103, Met106, and Glu111. Positions 203 and 217 each coordinate Mg(2+). Substrate contacts are provided by residues Asn268 and 325–327 (GIV).

Belongs to the succinate/malate CoA ligase beta subunit family. As to quaternary structure, heterotetramer of two alpha and two beta subunits. It depends on Mg(2+) as a cofactor.

It catalyses the reaction succinate + ATP + CoA = succinyl-CoA + ADP + phosphate. The catalysed reaction is GTP + succinate + CoA = succinyl-CoA + GDP + phosphate. Its pathway is carbohydrate metabolism; tricarboxylic acid cycle; succinate from succinyl-CoA (ligase route): step 1/1. Its function is as follows. Succinyl-CoA synthetase functions in the citric acid cycle (TCA), coupling the hydrolysis of succinyl-CoA to the synthesis of either ATP or GTP and thus represents the only step of substrate-level phosphorylation in the TCA. The beta subunit provides nucleotide specificity of the enzyme and binds the substrate succinate, while the binding sites for coenzyme A and phosphate are found in the alpha subunit. This Chlorobium phaeovibrioides (strain DSM 265 / 1930) (Prosthecochloris vibrioformis (strain DSM 265)) protein is Succinate--CoA ligase [ADP-forming] subunit beta.